A 550-amino-acid chain; its full sequence is Glucose-6-phosphate isomerase 1 (550 aa).

Glu355 serves as the catalytic Proton donor. Active-site residues include His386 and Lys512.

Belongs to the GPI family.

It localises to the cytoplasm. The enzyme catalyses alpha-D-glucose 6-phosphate = beta-D-fructose 6-phosphate. Its pathway is carbohydrate biosynthesis; gluconeogenesis. The protein operates within carbohydrate degradation; glycolysis; D-glyceraldehyde 3-phosphate and glycerone phosphate from D-glucose: step 2/4. In terms of biological role, catalyzes the reversible isomerization of glucose-6-phosphate to fructose-6-phosphate. The protein is Glucose-6-phosphate isomerase 1 of Rhodococcus jostii (strain RHA1).